Here is a 259-residue protein sequence, read N- to C-terminus: Ribosomal RNA small subunit methyltransferase A (259 aa).

Positions 13, 15, 40, 61, 85, and 103 each coordinate S-adenosyl-L-methionine.

Belongs to the class I-like SAM-binding methyltransferase superfamily. rRNA adenine N(6)-methyltransferase family. RsmA subfamily.

It localises to the cytoplasm. The enzyme catalyses adenosine(1518)/adenosine(1519) in 16S rRNA + 4 S-adenosyl-L-methionine = N(6)-dimethyladenosine(1518)/N(6)-dimethyladenosine(1519) in 16S rRNA + 4 S-adenosyl-L-homocysteine + 4 H(+). Functionally, specifically dimethylates two adjacent adenosines (A1518 and A1519) in the loop of a conserved hairpin near the 3'-end of 16S rRNA in the 30S particle. May play a critical role in biogenesis of 30S subunits. The sequence is that of Ribosomal RNA small subunit methyltransferase A from Neisseria meningitidis serogroup A / serotype 4A (strain DSM 15465 / Z2491).